We begin with the raw amino-acid sequence, 148 residues long: Putative cyclin-dependent kinase inhibitor SPL2 (148 aa).

A phosphoserine mark is found at Ser-59 and Ser-86.

It localises to the cytoplasmic granule. Its subcellular location is the cytoplasm. In terms of biological role, putative cyclin-dependent kinase (CDK) inhibitor necessary and sufficient for PHO pathway-dependent down-regulation of low-affinity phosphate transport. The polypeptide is Putative cyclin-dependent kinase inhibitor SPL2 (SPL2) (Saccharomyces cerevisiae (strain ATCC 204508 / S288c) (Baker's yeast)).